The chain runs to 120 residues: Putative iron-sulfur cluster insertion protein ErpA (120 aa).

C49, C113, and C115 together coordinate iron-sulfur cluster.

The protein belongs to the HesB/IscA family. As to quaternary structure, homodimer. Iron-sulfur cluster is required as a cofactor.

In terms of biological role, required for insertion of 4Fe-4S clusters. The protein is Putative iron-sulfur cluster insertion protein ErpA of Albidiferax ferrireducens (strain ATCC BAA-621 / DSM 15236 / T118) (Rhodoferax ferrireducens).